The chain runs to 287 residues: Telomere repeat-binding factor 5 (287 aa).

The 62-residue stretch at 1-62 (MGNQKLKWTA…WRNLSVPPGT (62 aa)) folds into the HTH myb-type domain. The segment at residues 28 to 58 (WKNILRDPEFADQLIHRSNIDLKDKWRNLSV) is a DNA-binding region (H-T-H motif). Residues 58 to 107 (VPPGTQSLTNKARPAKVKEEGDTPAADANDAVTIPRPIPTIPPPPGRRTL) are disordered. Positions 93–103 (RPIPTIPPPPG) are enriched in pro residues. The region spanning 119–193 (NAPRYDGVIF…SIQNFYKIPD (75 aa)) is the H15 domain. The stretch at 233–259 (AACKVVEAENKIDVAKLAAEEFEKMTK) forms a coiled coil.

Belongs to the histone H1/H5 family. SMH subfamily.

Its subcellular location is the nucleus. The protein resides in the chromosome. In terms of biological role, binds preferentially double-stranded telomeric repeats. This is Telomere repeat-binding factor 5 from Arabidopsis thaliana (Mouse-ear cress).